The following is a 470-amino-acid chain: NADH-quinone oxidoreductase subunit D (470 aa).

Over residues 1–18 the composition is skewed to low complexity; it reads MTPSTSTPHTSTAPHTST. A disordered region spans residues 1–37; the sequence is MTPSTSTPHTSTAPHTSTGQSTDGAAQPGDGSSAYEA.

It belongs to the complex I 49 kDa subunit family. In terms of assembly, NDH-1 is composed of 14 different subunits. Subunits NuoB, C, D, E, F, and G constitute the peripheral sector of the complex.

It localises to the cell membrane. It carries out the reaction a quinone + NADH + 5 H(+)(in) = a quinol + NAD(+) + 4 H(+)(out). Its function is as follows. NDH-1 shuttles electrons from NADH, via FMN and iron-sulfur (Fe-S) centers, to quinones in the respiratory chain. The immediate electron acceptor for the enzyme in this species is believed to be a menaquinone. Couples the redox reaction to proton translocation (for every two electrons transferred, four hydrogen ions are translocated across the cytoplasmic membrane), and thus conserves the redox energy in a proton gradient. This is NADH-quinone oxidoreductase subunit D from Frankia alni (strain DSM 45986 / CECT 9034 / ACN14a).